The sequence spans 120 residues: ATP-dependent Clp protease adapter protein ClpS (120 aa).

The interval 1 to 27 (MHAPSEIRLTFNQDRPQSNEDDGSGLA) is disordered.

It belongs to the ClpS family. In terms of assembly, binds to the N-terminal domain of the chaperone ClpA.

Its function is as follows. Involved in the modulation of the specificity of the ClpAP-mediated ATP-dependent protein degradation. The sequence is that of ATP-dependent Clp protease adapter protein ClpS from Pseudomonas putida (strain GB-1).